The sequence spans 344 residues: MPMERFLKDFTIPEKIEFLKSQDDGSYGKFTIYPFERGFGVTIGNTLRRVLLSSIEGYAITAMRVQSNNKDSSSKVVSSEFDLIPGVSEDTLEVIANIKNIHLKLREGEQRKTISFSVSGKDTNVLKASHFERDGVEVFNKDLVIATLSHDVNLDFEFQINYGRGYVSSEQNSKYLEEVNVIALDSIFSPIEKVSYSVEDTRVGQRSDYDKLVMEIWTTGVISAKDAIKKAASIVREFLFPLVDFEDSVSVSFDKSKSESSNLLDMSIEKLDLSVRSLNCLAKENVRTLGELISKNAEELSKARNFGKKSLEEIIEKLGSYQLFLGMSKEDALSVLSKNVKISE.

Residues 1–246 (MPMERFLKDF…EFLFPLVDFE (246 aa)) are alpha N-terminal domain (alpha-NTD). The interval 259–344 (ESSNLLDMSI…VLSKNVKISE (86 aa)) is alpha C-terminal domain (alpha-CTD).

The protein belongs to the RNA polymerase alpha chain family. In terms of assembly, homodimer. The RNAP catalytic core consists of 2 alpha, 1 beta, 1 beta' and 1 omega subunit. When a sigma factor is associated with the core the holoenzyme is formed, which can initiate transcription.

The catalysed reaction is RNA(n) + a ribonucleoside 5'-triphosphate = RNA(n+1) + diphosphate. Functionally, DNA-dependent RNA polymerase catalyzes the transcription of DNA into RNA using the four ribonucleoside triphosphates as substrates. This is DNA-directed RNA polymerase subunit alpha from Borreliella afzelii (strain PKo) (Borrelia afzelii).